The primary structure comprises 336 residues: UDP-N-acetylenolpyruvoylglucosamine reductase (336 aa).

Residues 1–178 enclose the FAD-binding PCMH-type domain; the sequence is MAHSLQTLHT…TTVHLALPKE (178 aa). R154 is a catalytic residue. Catalysis depends on S222, which acts as the Proton donor. The active site involves E318.

Belongs to the MurB family. FAD is required as a cofactor.

The protein localises to the cytoplasm. It catalyses the reaction UDP-N-acetyl-alpha-D-muramate + NADP(+) = UDP-N-acetyl-3-O-(1-carboxyvinyl)-alpha-D-glucosamine + NADPH + H(+). Its pathway is cell wall biogenesis; peptidoglycan biosynthesis. In terms of biological role, cell wall formation. The polypeptide is UDP-N-acetylenolpyruvoylglucosamine reductase (Pseudoalteromonas translucida (strain TAC 125)).